A 64-amino-acid chain; its full sequence is Enteric beta-defensin (64 aa).

The signal sequence occupies residues 1–26; it reads MRLHHLLLTLLFLVLSAGSGFTQGIS. Disulfide bonds link Cys31/Cys60, Cys38/Cys53, and Cys43/Cys61.

Belongs to the beta-defensin family. LAP/TAP subfamily. Inducibly expressed in enteric epithelial cells.

The protein resides in the secreted. In terms of biological role, has antibacterial activity. The chain is Enteric beta-defensin (EBD) from Bos taurus (Bovine).